Here is a 450-residue protein sequence, read N- to C-terminus: MDSDTLRVFQNELICCICVNYFIDPVTTDCVHSFCRPCLCLCSEEGRAPMRCPLCRKISEKPNFNTNVALKKLASLARQTRPQNINSSDNICVLHEETKELFCEADKRLLCGPCSESPEHMAHSHSPIGWAAEECRVQKLIKEMDYLWKINQETQNNLNQETSKFCSLVDYVSLRKVIITIQYQKMHIFLDEEEQRHLQALEREAKELFQQLQDSQVRMTQHLEGMKDMYRELWETYHMPDVELLQDVGNISARTDLAQMPKPQPVNPELTSWCITGVLDMLNNFRVDNALSTEMTPCYISLSEDVRRVIFGDDHRSAPMDPQGVESFAVWCAQAFTSGKHYWEVDVTHSSNWILGVCRDSRTADTNIVIDSDKTFFSISSKTSNHYSLSTNSPPLIQYVQRPLGWVGVFLDYDNGSVSFFDVSKGSLIYGFPPSSFSSPLRPFFCFGCT.

The RING-type zinc finger occupies 15-56; it reads CCICVNYFIDPVTTDCVHSFCRPCLCLCSEEGRAPMRCPLCR. The segment at 87–128 adopts a B box-type zinc-finger fold; the sequence is SSDNICVLHEETKELFCEADKRLLCGPCSESPEHMAHSHSPI. Residues Cys92, His95, Cys114, and His120 each coordinate Zn(2+). Residues 191–218 are a coiled coil; the sequence is DEEEQRHLQALEREAKELFQQLQDSQVR. The region spanning 269–450 is the B30.2/SPRY domain; sequence ELTSWCITGV…LRPFFCFGCT (182 aa).

This sequence belongs to the TRIM/RBCC family.

The chain is Tripartite motif-containing protein 64C (TRIM64C) from Homo sapiens (Human).